A 406-amino-acid polypeptide reads, in one-letter code: Vacuole membrane protein 1 (406 aa).

The span at 1 to 20 shows a compositional bias: basic and acidic residues; sequence MAENGKNCDQRRIAMSKDQH. Residues 1-37 are disordered; it reads MAENGKNCDQRRIAMSKDQHNGSLTDPSSVHEKKRRD. At A2 the chain carries N-acetylalanine. The Cytoplasmic portion of the chain corresponds to 2 to 77; that stretch reads AENGKNCDQR…WTSKLWHRQS (76 aa). Residues 78-98 traverse the membrane as a helical segment; sequence IVVSFLLLLAALVATYYVEGA. Residues 99 to 109 lie on the Extracellular side of the membrane; the sequence is HQQYVQRIEKQ. Residues 110–130 traverse the membrane as a helical segment; the sequence is FLLYAYWIGLGILSSVGLGTG. Residues 131-250 lie on the Cytoplasmic side of the membrane; the sequence is LHTFLLYLGP…ASRAKLAVQK (120 aa). The VTT domain stretch occupies residues 173-316; the sequence is GAEGAISLWS…FVIVTFSKHI (144 aa). Residues 251–271 form a helical membrane-spanning segment; sequence LVQKVGFFGILACASIPNPLF. At 272–273 the chain is on the extracellular side; sequence DL. The chain crosses the membrane as a helical span at residues 274–294; it reads AGITCGHFLVPFWTFFGATLI. Over 295 to 305 the chain is Cytoplasmic; it reads GKAIIKMHIQK. The chain crosses the membrane as a helical span at residues 306–326; that stretch reads IFVIVTFSKHIVEQMVTFIGA. At 327–363 the chain is on the extracellular side; it reads VPGIGPSLQKPFQEYLEAQRQKLHHRSEAGTPQGENW. The helical transmembrane segment at 364–384 threads the bilayer; the sequence is LSWMFEKLVVAMVCYFVLSII. Residues 385–406 are Cytoplasmic-facing; sequence NSMAQNYAKRIQQRLNSEEKTK.

It belongs to the VMP1 family. Interacts with BECN1. Interacts with TJP1. Interacts with TP53INP2. Interacts with TMEM41B. Interacts with ATP2A2, PLN and SLN; competes with PLN and SLN to prevent them from forming an inhibitory complex with ATP2A2. Interacts with ATG2A.

The protein resides in the endoplasmic reticulum-Golgi intermediate compartment membrane. It is found in the cell membrane. The protein localises to the vacuole membrane. Its subcellular location is the endoplasmic reticulum membrane. It catalyses the reaction a 1,2-diacyl-sn-glycero-3-phospho-L-serine(in) = a 1,2-diacyl-sn-glycero-3-phospho-L-serine(out). It carries out the reaction cholesterol(in) = cholesterol(out). The enzyme catalyses a 1,2-diacyl-sn-glycero-3-phosphocholine(in) = a 1,2-diacyl-sn-glycero-3-phosphocholine(out). The catalysed reaction is a 1,2-diacyl-sn-glycero-3-phosphoethanolamine(in) = a 1,2-diacyl-sn-glycero-3-phosphoethanolamine(out). Its function is as follows. Phospholipid scramblase involved in lipid homeostasis and membrane dynamics processes. Has phospholipid scramblase activity toward cholesterol and phosphatidylserine, as well as phosphatidylethanolamine and phosphatidylcholine. Required for autophagosome formation: participates in early stages of autophagosome biogenesis at the endoplasmic reticulum (ER) membrane by reequilibrating the leaflets of the ER as lipids are extracted by ATG2 (ATG2A or ATG2B) to mediate autophagosome assembly. Regulates ATP2A2 activity to control ER-isolation membrane contacts for autophagosome formation. In addition to autophagy, involved in other processes in which phospholipid scramblase activity is required. Modulates ER contacts with lipid droplets, mitochondria and endosomes. Plays an essential role in formation of cell junctions. Upon stress such as bacterial and viral infection, promotes formation of cytoplasmic vacuoles followed by cell death. Involved in the cytoplasmic vacuolization of acinar cells during the early stage of acute pancreatitis. The chain is Vacuole membrane protein 1 from Mus musculus (Mouse).